Here is a 307-residue protein sequence, read N- to C-terminus: Non-homologous end joining protein Ku (307 aa).

A Ku domain is found at 11-179; the sequence is LSFGLVSIPV…EVRSMKDLNI (169 aa). 2 stretches are compositionally biased toward low complexity: residues 257–267 and 290–307; these read RGGAKAKPAAA and ARAP…RARK. Positions 257–307 are disordered; that stretch reads RGGAKAKPAAAPRRKAPEPVAGMAEATRARKPAARAPKSPAEAPAKVRARK.

This sequence belongs to the prokaryotic Ku family. In terms of assembly, homodimer. Interacts with LigD.

Functionally, with LigD forms a non-homologous end joining (NHEJ) DNA repair enzyme, which repairs dsDNA breaks with reduced fidelity. Binds linear dsDNA with 5'- and 3'- overhangs but not closed circular dsDNA nor ssDNA. Recruits and stimulates the ligase activity of LigD. This chain is Non-homologous end joining protein Ku, found in Paraburkholderia phymatum (strain DSM 17167 / CIP 108236 / LMG 21445 / STM815) (Burkholderia phymatum).